A 276-amino-acid chain; its full sequence is MEQSIRDEMRVLPSIDPHFEIERRVAFIKRKLQDSGCKSLVLGISGGVDSTTCGRLAQLAVDQLNEESDDNGYQFIAVRLPYGEQKDEDEAQLALDFIQPTHSVSVNIKAGVDGLHAASHVALEGTGLLPTDAAKVDLVKGNVKARARMVAQYEIAGYVGGLVLGTDHSAENITGFYTKFGDGACDMAPLFGLSKRQVREVAATLGAPELLVKKVPTADLEELAPQKADEDALSLTYEQIDDFLEGKPVSQEVSDRLVAIYKMTQHKRQPIPTIYD.

ATP is bound at residue 43 to 50 (GISGGVDS). Aspartate 49 contacts Mg(2+). Residue arginine 146 participates in deamido-NAD(+) binding. Residue threonine 166 coordinates ATP. Glutamate 171 is a Mg(2+) binding site. Positions 179 and 186 each coordinate deamido-NAD(+). Residues lysine 195 and threonine 217 each coordinate ATP. A deamido-NAD(+)-binding site is contributed by 266-267 (HK).

It belongs to the NAD synthetase family. In terms of assembly, homodimer.

The catalysed reaction is deamido-NAD(+) + NH4(+) + ATP = AMP + diphosphate + NAD(+) + H(+). Its pathway is cofactor biosynthesis; NAD(+) biosynthesis; NAD(+) from deamido-NAD(+) (ammonia route): step 1/1. In terms of biological role, catalyzes the ATP-dependent amidation of deamido-NAD to form NAD. Uses ammonia as a nitrogen source. In Vibrio campbellii (strain ATCC BAA-1116), this protein is NH(3)-dependent NAD(+) synthetase.